The following is an 86-amino-acid chain: Small ribosomal subunit protein bS16 (86 aa).

Belongs to the bacterial ribosomal protein bS16 family.

The chain is Small ribosomal subunit protein bS16 from Thermoanaerobacter sp. (strain X514).